Reading from the N-terminus, the 392-residue chain is MYQSIAMATNHGPSGYEGTGSFMHSATAATSPVYVPTTRVSSMIHSLPYLQTSGSSQQGSPVSGHNMWAQAGVESSAYNPGTSHPPVSPRFTFSSSPPITAPSSREVSYSSPLGISANGREQYSRGLGATYASPYPAYMSPDMGAAWTASPFDSSMLHNLQNRAVTSRHPNIEFFDDFSEGRECVNCGAMSTPLWRRDGTGHYLCNACGLYHKMNGINRPLIKPQRRLSASRRVGLSCANCHTTTTTLWRRNAEGEPVCNACGLYMKLHGVPRPLAMKKEGIQTRKRKPKNLSKSKTLTGQSGSDSLTPSTSSTNSMGEEMRPIKIEPGLSPPYDHSNSISQASALSTITSHGSSYYPMPSLKLSPQNHHSTFNPSPQANSKHDSWNNLVLA.

The interval 75–113 (SSAYNPGTSHPPVSPRFTFSSSPPITAPSSREVSYSSPL) is disordered. The span at 91 to 113 (FTFSSSPPITAPSSREVSYSSPL) shows a compositional bias: polar residues. 2 consecutive GATA-type zinc fingers follow at residues 184–208 (CVNCGAMSTPLWRRDGTGHYLCNAC) and 238–262 (CANCHTTTTTLWRRNAEGEPVCNAC). 2 disordered regions span residues 279–339 (KEGI…HSNS) and 359–392 (MPSLKLSPQNHHSTFNPSPQANSKHDSWNNLVLA). The segment covering 284 to 293 (TRKRKPKNLS) has biased composition (basic residues). Residues 302–316 (SGSDSLTPSTSSTNS) show a composition bias toward low complexity. Polar residues predominate over residues 364-380 (LSPQNHHSTFNPSPQAN).

As to expression, expressed at high levels in heart, small intestine, stomach, ovary, and liver. Found at much lower levels in lung, spleen, pancreas and skin.

The protein localises to the nucleus. Functionally, transcriptional activator that binds to the consensus sequence 5'-AGATAG-3'. Associated with cardiac specification and can regulate cardiac-specific transcription during embryogenesis. Activates the expression of cardiac MHC-alpha in vivo. This is Transcription factor GATA-4 (gata4) from Xenopus laevis (African clawed frog).